The chain runs to 199 residues: ATP-dependent Clp protease proteolytic subunit (199 aa).

The active-site Nucleophile is serine 102. Histidine 127 is a catalytic residue.

Belongs to the peptidase S14 family. As to quaternary structure, fourteen ClpP subunits assemble into 2 heptameric rings which stack back to back to give a disk-like structure with a central cavity, resembling the structure of eukaryotic proteasomes.

It localises to the cytoplasm. It catalyses the reaction Hydrolysis of proteins to small peptides in the presence of ATP and magnesium. alpha-casein is the usual test substrate. In the absence of ATP, only oligopeptides shorter than five residues are hydrolyzed (such as succinyl-Leu-Tyr-|-NHMec, and Leu-Tyr-Leu-|-Tyr-Trp, in which cleavage of the -Tyr-|-Leu- and -Tyr-|-Trp bonds also occurs).. Functionally, cleaves peptides in various proteins in a process that requires ATP hydrolysis. Has a chymotrypsin-like activity. Plays a major role in the degradation of misfolded proteins. The protein is ATP-dependent Clp protease proteolytic subunit of Pseudothermotoga lettingae (strain ATCC BAA-301 / DSM 14385 / NBRC 107922 / TMO) (Thermotoga lettingae).